Reading from the N-terminus, the 204-residue chain is Thymidylate kinase (204 aa).

Residue Gly-11–Thr-18 participates in ATP binding.

It belongs to the thymidylate kinase family.

The catalysed reaction is dTMP + ATP = dTDP + ADP. The protein operates within pyrimidine metabolism; dTTP biosynthesis. This Camelus protein is Thymidylate kinase (TMK).